The following is an 809-amino-acid chain: Phenylalanine--tRNA ligase beta subunit (809 aa).

The tRNA-binding domain occupies 39–152 (KDKWPNVYVG…ADAPVGMLAS (114 aa)). Residues 404–492 (KDRNSVVLSL…RIAGYDTIPC (89 aa)) form the B5 domain. Residues aspartate 470, aspartate 476, glutamate 479, and glutamate 480 each contribute to the Mg(2+) site. One can recognise an FDX-ACB domain in the interval 717 to 808 (NRFPSVERDL…LNTETGAVLR (92 aa)).

Belongs to the phenylalanyl-tRNA synthetase beta subunit family. Type 1 subfamily. As to quaternary structure, tetramer of two alpha and two beta subunits. Requires Mg(2+) as cofactor.

Its subcellular location is the cytoplasm. The catalysed reaction is tRNA(Phe) + L-phenylalanine + ATP = L-phenylalanyl-tRNA(Phe) + AMP + diphosphate + H(+). The protein is Phenylalanine--tRNA ligase beta subunit of Dehalococcoides mccartyi (strain ATCC BAA-2266 / KCTC 15142 / 195) (Dehalococcoides ethenogenes (strain 195)).